The following is a 149-amino-acid chain: Nucleoside diphosphate kinase 1 (149 aa).

Residues K9, F57, R85, T91, R102, and N112 each coordinate ATP. Catalysis depends on H115, which acts as the Pros-phosphohistidine intermediate.

The protein belongs to the NDK family. Homohexamer. Can also form dodecamers. Requires Mg(2+) as cofactor.

The protein resides in the nucleus. The enzyme catalyses a 2'-deoxyribonucleoside 5'-diphosphate + ATP = a 2'-deoxyribonucleoside 5'-triphosphate + ADP. It catalyses the reaction a ribonucleoside 5'-diphosphate + ATP = a ribonucleoside 5'-triphosphate + ADP. Functionally, major role in the synthesis of nucleoside triphosphates other than ATP. The ATP gamma phosphate is transferred to the NDP beta phosphate via a ping-pong mechanism, using a phosphorylated active-site intermediate. Involved in transcription regulation. Has G-quadruplex (G4) DNA-binding activity, which is independent of its nucleotide-binding and kinase activity. Binds folded G4 with low nanomolar affinity and corresponding unfolded G-rich DNA more weakly. Stabilizes folded G4s regardless of whether they are prefolded or not. This chain is Nucleoside diphosphate kinase 1, found in Zea mays (Maize).